The primary structure comprises 607 residues: ATP-dependent RNA helicase-like protein DB10 (607 aa).

Residues 1–10 are compositionally biased toward polar residues; it reads MAVVTASSAG. 2 disordered regions span residues 1-25 and 66-108; these read MAVVTASSAGPSYAPEDPTLPKPWK and VFVS…DGTS. Residues 18–52 form the WW domain; the sequence is PTLPKPWKGLVDGTTGFIYFWNPETNDTQYERPVP. Positions 89-98 are enriched in polar residues; sequence RGSNNKIARS. Over residues 99–108 the composition is skewed to basic and acidic residues; it reads SSDRFHDGTS. The Q motif signature appears at 145–173; that stretch reads TSFEATGFPSEIVREMHQAGFSAPTPIQA. Residues 176-350 enclose the Helicase ATP-binding domain; sequence WPIALQGRDI…ADLLVNSVQV (175 aa). Residue 189–196 participates in ATP binding; sequence AKTGSGKT. The DEAD box signature appears at 298 to 301; the sequence is DEAD. Residues 379–523 form the Helicase C-terminal domain; it reads RVEQILRSKE…CVPTELRDMA (145 aa). The disordered stretch occupies residues 519-607; the sequence is LRDMASRGGG…WSGKKSRFTD (89 aa). Residues 538–548 are compositionally biased toward gly residues; sequence SGPGGRGGRGG. Over residues 562–574 the composition is skewed to basic and acidic residues; that stretch reads GYDRGSRDSDRYG.

This sequence belongs to the DEAD box helicase family.

The enzyme catalyses ATP + H2O = ADP + phosphate + H(+). This Nicotiana sylvestris (Wood tobacco) protein is ATP-dependent RNA helicase-like protein DB10.